Reading from the N-terminus, the 557-residue chain is Urocanate hydratase (557 aa).

Residues 52 to 53 (GG), Gln-130, 176 to 178 (GMG), Glu-196, 242 to 243 (NA), 263 to 267 (QTSAH), 273 to 274 (YL), and Tyr-322 each bind NAD(+). The active site involves Cys-410. Position 492 (Gly-492) interacts with NAD(+).

The protein belongs to the urocanase family. NAD(+) serves as cofactor.

It is found in the cytoplasm. The catalysed reaction is 4-imidazolone-5-propanoate = trans-urocanate + H2O. It functions in the pathway amino-acid degradation; L-histidine degradation into L-glutamate; N-formimidoyl-L-glutamate from L-histidine: step 2/3. In terms of biological role, catalyzes the conversion of urocanate to 4-imidazolone-5-propionate. This Rhizobium meliloti (strain 1021) (Ensifer meliloti) protein is Urocanate hydratase.